The following is a 412-amino-acid chain: Autophagy-related protein 34 (412 aa).

Positions 246 to 348 (NDPLLHVEVS…SNEITLKSPL (103 aa)) are AMS1-binding.

In terms of assembly, interacts with AMS1, ATG8 and ATG11.

It is found in the preautophagosomal structure membrane. Cargo-receptor protein involved in the cytoplasm to vacuole transport (Cvt) and in autophagy. Recognizes cargo proteins, such as AMS1 and delivers them to the pre-autophagosomal structure for eventual engulfment by the autophagosome and targeting to the vacuole. The chain is Autophagy-related protein 34 (ATG34) from Saccharomyces cerevisiae (strain ATCC 204508 / S288c) (Baker's yeast).